A 1140-amino-acid polypeptide reads, in one-letter code: DNA damage-binding protein 1 (1140 aa).

It belongs to the DDB1 family. As to quaternary structure, component of the UV-DDB complex which includes DDB1 and DDB2; the heterodimer dimerizes to give rise to a heterotetramer when bound to damaged DNA. The UV-DDB complex interacts with monoubiquitinated histone H2A and binds to XPC via the DDB2 subunit. Component of numerous DCX (DDB1-CUL4-X-box) E3 ubiquitin-protein ligase complexes which consist of a core of DDB1, CUL4A or CUL4B and RBX1. DDB1 may recruit specific substrate targeting subunits to the DCX complex. These substrate targeting subunits are generally known as DCAF (DDB1- and CUL4-associated factor) or CDW (CUL4-DDB1-associated WD40-repeat) proteins. Interacts with Fbw5 and gig. May interact with ohgt.

The protein localises to the cytoplasm. The protein resides in the nucleus. It participates in protein modification; protein ubiquitination. Protein, which is both involved in DNA repair and protein ubiquitination, as part of the UV-DDB complex and DCX (DDB1-CUL4-X-box) complexes, respectively. Core component of the UV-DDB complex (UV-damaged DNA-binding protein complex), a complex that recognizes UV-induced DNA damage and recruit proteins of the nucleotide excision repair pathway (the NER pathway) to initiate DNA repair. The UV-DDB complex preferentially binds to cyclobutane pyrimidine dimers (CPD), 6-4 photoproducts (6-4 PP), apurinic sites and short mismatches. Also functions as a component of numerous distinct DCX (DDB1-CUL4-X-box) E3 ubiquitin-protein ligase complexes which mediate the ubiquitination and subsequent proteasomal degradation of target proteins. The functional specificity of the DCX E3 ubiquitin-protein ligase complex is determined by the variable substrate recognition component recruited by DDB1. Required for degradation of gig. Required for genomic stability in the face of endogenous DNA lesions and for the response to MMS-induced DNA damage. Required for normal wing development. In Drosophila melanogaster (Fruit fly), this protein is DNA damage-binding protein 1 (pic).